An 80-amino-acid polypeptide reads, in one-letter code: Acyl carrier protein (80 aa).

A Carrier domain is found at 1–79 (MSQEEILQKV…DAVKFIEAKK (79 aa)). At Ser39 the chain carries O-(pantetheine 4'-phosphoryl)serine.

The protein belongs to the acyl carrier protein (ACP) family. 4'-phosphopantetheine is transferred from CoA to a specific serine of apo-ACP by AcpS. This modification is essential for activity because fatty acids are bound in thioester linkage to the sulfhydryl of the prosthetic group.

Its subcellular location is the cytoplasm. It functions in the pathway lipid metabolism; fatty acid biosynthesis. In terms of biological role, carrier of the growing fatty acid chain in fatty acid biosynthesis. The sequence is that of Acyl carrier protein from Prochlorococcus marinus (strain MIT 9515).